Consider the following 247-residue polypeptide: Pyrroloquinoline-quinone synthase (247 aa).

Belongs to the PqqC family.

It catalyses the reaction 6-(2-amino-2-carboxyethyl)-7,8-dioxo-1,2,3,4,7,8-hexahydroquinoline-2,4-dicarboxylate + 3 O2 = pyrroloquinoline quinone + 2 H2O2 + 2 H2O + H(+). The protein operates within cofactor biosynthesis; pyrroloquinoline quinone biosynthesis. Its function is as follows. Ring cyclization and eight-electron oxidation of 3a-(2-amino-2-carboxyethyl)-4,5-dioxo-4,5,6,7,8,9-hexahydroquinoline-7,9-dicarboxylic-acid to PQQ. The chain is Pyrroloquinoline-quinone synthase from Rhizobium rhizogenes (strain K84 / ATCC BAA-868) (Agrobacterium radiobacter).